The following is a 464-amino-acid chain: Plant intracellular Ras-group-related LRR protein 3 (464 aa).

Residues 106–138 are a coiled coil; the sequence is AAVVSLEEVHEGYEKQLRDLEEEIGRVYASAVE. LRR repeat units lie at residues 160-183, 184-206, 207-230, 232-252, 254-275, 276-299, 301-322, 323-347, 348-370, and 372-393; these read GGVV…LGKI, VGLV…ISGL, EKLE…GLLL, LRIL…IAQC, SLVE…FGYG, LLNL…ICEM, SLRY…IGRL, TNLE…ISDL, ANLR…FFRL, and KLEK…MVNQ. Positions 398–406 match the GVYW; degenerate motif; the sequence is VREFMRKRW.

It belongs to the SHOC2 family. As to expression, widely expressed.

In terms of biological role, leucine-rich repeat protein that likely mediates protein interactions, possibly in the context of signal transduction. The chain is Plant intracellular Ras-group-related LRR protein 3 (PIRL3) from Arabidopsis thaliana (Mouse-ear cress).